The following is a 377-amino-acid chain: Caspase-4 (377 aa).

Residues 1 to 59 (MAEGNHRKKPLKVLESLGKDFLTGVLDNLVEQNVLNWKEEEKKKYYDAKTEDKVRVMAD) are required for LPS-binding. The propeptide occupies 1-80 (MAEGNHRKKP…MLLQTFFNID (80 aa)). Residues 1–91 (MAEGNHRKKP…ISPNKKAHPN (91 aa)) enclose the CARD domain. Residue Ala2 is modified to N-acetylalanine. At Ser83 the chain carries Phosphoserine. Positions 84–104 (PNKKAHPNMEAGPPESGESTD) are disordered. Active-site residues include His210 and Cys258. The propeptide occupies 271–289 (SPASLEVASSQSSENLEED). Arg314 carries the post-translational modification (Microbial infection) ADP-riboxanated arginine.

Belongs to the peptidase C14A family. In terms of assembly, heterotetramer that consists of two anti-parallel arranged heterodimers, each one formed by a 20 kDa (Caspase-4 subunit p20) and a 10 kDa (Caspase-4 subunit p10) subunit. Upon direct LPS-binding, forms large homooligomers, resulting in its activation. These oligomers are often referred to as 'non-canonical inflammasomes'. In its precursor form, interacts with TMEM214; this interaction is required for association with the endoplasmic reticulum membrane. Interacts with CASP1. Interacts with NOD2. Interacts with SERPINB1; this interaction regulates CASP4 activity. Heterotetramer that consists of two anti-parallel arranged heterodimers, each one formed by a 20 kDa (Caspase-4 subunit p20) and a 10 kDa (Caspase-4 subunit p10) subunit. As to quaternary structure, (Microbial infection) Interacts with NleF protein from pathogenic E.coli; this interaction leads to enzyme inhibition. In terms of assembly, (Microbial infection) Interacts with cathepsin CTSG; the interaction is promoted by the Td92 surface protein of the periodontal pathogen T.denticola and leads to CASP4 activation. In response to activation signals, undergoes autoproteolytic cleavage and activation. Post-translationally, (Microbial infection) ADP-riboxanation by S.flexneri OspC3 blocks CASP4 autoprocessing, preventing CASP4 activation and ability to recognize and cleave GSDMD, thereby thwarting the inflammasome/pyroptosis-mediated defense. Widely expressed, including in keratinocytes and colonic and small intestinal epithelial cells (at protein level). Not detected in brain.

The protein resides in the cytoplasm. Its subcellular location is the cytosol. It localises to the endoplasmic reticulum membrane. It is found in the mitochondrion. The protein localises to the inflammasome. The protein resides in the secreted. It catalyses the reaction Strict requirement for Asp at the P1 position. It has a preferred cleavage sequence of Tyr-Val-Ala-Asp-|- but also cleaves at Asp-Glu-Val-Asp-|-.. With respect to regulation, activated by homooligomerization induced by direct binding to cytosolic LPS, in a TLR4-independent manner. In addition to LPS, CASP4/CASP11 may also be activated by oxidized phospholipid 1-palmitoyl-2-arachidonoyl- sn-glycero-3-phosphorylcholine, an oxidized phospholipid (oxPAPC), in dendritic cells, promoting adaptive immunity. The role of oxPAPC is however unclear and another report suggests that oxPAPC competes with LPS-binding and inhibits the non-canonical inflammasome in macrophages. Functionally, inflammatory caspase that acts as the effector of the non-canonical inflammasome by mediating lipopolysaccharide (LPS)-induced pyroptosis. Also indirectly activates the NLRP3 and NLRP6 inflammasomes. Acts as a thiol protease that cleaves a tetrapeptide after an Asp residue at position P1: catalyzes cleavage of CGAS, GSDMD and IL18. Effector of the non-canonical inflammasome independently of NLRP3 inflammasome and CASP1: the non-canonical inflammasome promotes pyroptosis through GSDMD cleavage without involving secretion of cytokine IL1B. In the non-canonical inflammasome, CASP4 is activated by direct binding to the lipid A moiety of LPS without the need of an upstream sensor. LPS-binding promotes CASP4 activation and CASP4-mediated cleavage of GSDMD and IL18, followed by IL18 secretion through the GSDMD pore, pyroptosis of infected cells and their extrusion into the gut lumen. Also indirectly promotes secretion of mature cytokines (IL1A and HMGB1) downstream of GSDMD-mediated pyroptosis via activation of the NLRP3 and NLRP6 inflammasomes. Involved in NLRP3-dependent CASP1 activation and IL1B secretion in response to non-canonical activators, such as UVB radiation or cholera enterotoxin. Involved in NLRP6 inflammasome-dependent activation in response to lipoteichoic acid (LTA), a cell-wall component of Gram-positive bacteria, which leads to CASP1 activation and IL1B secretion. Involved in LPS-induced IL6 secretion; this activity may not require caspase enzymatic activity. The non-canonical inflammasome is required for innate immunity to cytosolic, but not vacuolar, bacteria. Plays a crucial role in the restriction of S.typhimurium replication in colonic epithelial cells during infection. Activation of the non-canonical inflammasome in brain endothelial cells can lead to excessive pyroptosis, leading to blood-brain barrier breakdown. Pyroptosis limits bacterial replication, while cytokine secretion promotes the recruitment and activation of immune cells and triggers mucosal inflammation. May also act as an activator of adaptive immunity in dendritic cells, following activation by oxidized phospholipid 1-palmitoyl-2-arachidonoyl- sn-glycero-3-phosphorylcholine, an oxidized phospholipid (oxPAPC). Involved in cell death induced by endoplasmic reticulum stress and by treatment with cytotoxic APP peptides found in Alzheimer's patient brains. Cleavage of GSDMD is not strictly dependent on the consensus cleavage site but depends on an exosite interface on CASP4 that recognizes and binds the Gasdermin-D, C-terminal (GSDMD-CT) part. Catalyzes cleavage and maturation of IL18; IL18 processing also depends of the exosite interface on CASP4. In contrast, it does not directly process IL1B. During non-canonical inflammasome activation, cuts CGAS and may play a role in the regulation of antiviral innate immune activation. In terms of biological role, (Microbial infection) In response to the Td92 surface protein of the periodontal pathogen T.denticola, activated by cathepsin CTSG which leads to production and secretion of IL1A and pyroptosis of gingival fibroblasts. This chain is Caspase-4, found in Homo sapiens (Human).